The following is a 317-amino-acid chain: Transcription factor EC (317 aa).

The segment at 1–44 is disordered; the sequence is MTLDHQILNQSFKRSHPPTPSSELLVQHGHPSPESDTGLTGNPL. The tract at residues 1-90 is necessary for transcriptional transactivation; it reads MTLDHQILNQ…GLTSASCPSS (90 aa). The span at 34 to 43 shows a compositional bias: polar residues; that stretch reads ESDTGLTGNP. Residues 110–163 form the bHLH domain; that stretch reads QKKDNHNLIERRRRYNINYRIKELGTLIPKSNDPDMRWNKGTILKASVEYIKWL. Residues 241–317 form a necessary for transcriptional transactivation region; it reads TSPELCDQAM…SFSSEDGDEL (77 aa). Residues 297 to 317 form a disordered region; the sequence is PAVSKESSRRSSFSSEDGDEL.

It belongs to the MiT/TFE family. In terms of assembly, homodimer. Forms heterodimers with MITF and TFE3. Interacts with MITF.

Its subcellular location is the nucleus. Functionally, transcriptional regulator that acts as a repressor or an activator. Acts as a transcriptional repressor on minimal promoter containing element F (that includes an E-box sequence). Binds to element F in an E-box sequence-specific manner. Acts as a transcriptional transactivator on the proximal promoter region of the tartrate-resistant acid phosphatase (TRAP) E-box containing promoter. Collaborates with MITF in target gene activation. Acts as a transcriptional repressor on minimal promoter containing mu E3 enhancer sequence. Binds to mu E3 DNA sequence of the immunoglobulin heavy-chain gene enhancer. Binds DNA in a homo- or heterodimeric form. The sequence is that of Transcription factor EC (TFEC) from Bos taurus (Bovine).